The following is a 140-amino-acid chain: Large ribosomal subunit protein uL16c (140 aa).

The protein belongs to the universal ribosomal protein uL16 family. As to quaternary structure, part of the 50S ribosomal subunit.

The protein localises to the plastid. It is found in the chloroplast. In Psilotum nudum (Whisk fern), this protein is Large ribosomal subunit protein uL16c.